The following is a 596-amino-acid chain: Pescadillo homolog (596 aa).

One can recognise a BRCT domain in the interval 347–440 (PTSTLFSEFV…ELVPANLYLP (94 aa)). Residues 449–552 (SPWGDSVGYD…EEKDLKLIMM (104 aa)) are disordered. A coiled-coil region spans residues 460–596 (AAELAEEEAE…TKAKLKKLEN (137 aa)). The segment covering 463-500 (LAEEEAESEEEEEVSDEAEGDEEATLAAEEDEEDEAEA) has biased composition (acidic residues). Over residues 501–510 (EELRAQKELE) the composition is skewed to basic and acidic residues. Residues 519–529 (SEAADSAAPSK) are compositionally biased toward low complexity.

It belongs to the pescadillo family. As to quaternary structure, component of the NOP7 complex, composed of ERB1, NOP7 and YTM1. The complex is held together by ERB1, which interacts with NOP7 via its N-terminal domain and with YTM1 via a high-affinity interaction between the seven-bladed beta-propeller domains of the 2 proteins. The NOP7 complex associates with the 66S pre-ribosome.

The protein localises to the nucleus. Its subcellular location is the nucleolus. The protein resides in the nucleoplasm. Its function is as follows. Component of the NOP7 complex, which is required for maturation of the 25S and 5.8S ribosomal RNAs and formation of the 60S ribosome. The chain is Pescadillo homolog from Eremothecium gossypii (strain ATCC 10895 / CBS 109.51 / FGSC 9923 / NRRL Y-1056) (Yeast).